We begin with the raw amino-acid sequence, 70 residues long: Waprin-Thr1 (70 aa).

The signal sequence occupies residues 1 to 19 (MKARLLLLSVVILVGMVSA). One can recognise a WAP domain in the interval 20–70 (ENEKAGSCPDVNQPIPPLGLCRNMCESDSGCPNNEKCCKNGCGFMTCSRPR). 4 disulfides stabilise this stretch: cysteine 27/cysteine 57, cysteine 40/cysteine 61, cysteine 44/cysteine 56, and cysteine 50/cysteine 66.

The protein belongs to the venom waprin family. In terms of tissue distribution, expressed by the venom gland.

Its subcellular location is the secreted. In terms of biological role, damages membranes of susceptible bacteria. Has no hemolytic activity. Not toxic to mice. Does not inhibit the proteinases elastase and cathepsin G. The polypeptide is Waprin-Thr1 (Thrasops jacksonii (Jackson's black tree snake)).